The sequence spans 394 residues: Alanine racemase 2 (394 aa).

Lys39 serves as the catalytic Proton acceptor; specific for D-alanine. At Lys39 the chain carries N6-(pyridoxal phosphate)lysine. Arg139 serves as a coordination point for substrate. The active-site Proton acceptor; specific for L-alanine is the Tyr272. Residue Met320 participates in substrate binding.

It belongs to the alanine racemase family. The cofactor is pyridoxal 5'-phosphate.

It carries out the reaction L-alanine = D-alanine. It participates in amino-acid biosynthesis; D-alanine biosynthesis; D-alanine from L-alanine: step 1/1. In terms of biological role, catalyzes the interconversion of L-alanine and D-alanine. May also act on other amino acids. The protein is Alanine racemase 2 (alr2) of Bacillus subtilis (strain 168).